We begin with the raw amino-acid sequence, 146 residues long: Large ribosomal subunit protein uL15 (146 aa).

Positions 1 to 18 (MKLHELKPTPGSRHERNR) are enriched in basic and acidic residues. A disordered region spans residues 1-69 (MKLHELKPTP…RLPKRGFNNP (69 aa)). Gly residues predominate over residues 42 to 52 (SGGGVRPGFEG).

Belongs to the universal ribosomal protein uL15 family. Part of the 50S ribosomal subunit.

Binds to the 23S rRNA. The sequence is that of Large ribosomal subunit protein uL15 from Exiguobacterium sp. (strain ATCC BAA-1283 / AT1b).